A 532-amino-acid polypeptide reads, in one-letter code: Glutamate--cysteine ligase (532 aa).

The protein belongs to the glutamate--cysteine ligase type 1 family. Type 1 subfamily.

The enzyme catalyses L-cysteine + L-glutamate + ATP = gamma-L-glutamyl-L-cysteine + ADP + phosphate + H(+). The protein operates within sulfur metabolism; glutathione biosynthesis; glutathione from L-cysteine and L-glutamate: step 1/2. In Pseudomonas fluorescens (strain ATCC BAA-477 / NRRL B-23932 / Pf-5), this protein is Glutamate--cysteine ligase.